A 317-amino-acid chain; its full sequence is tRNA(Met) cytidine acetate ligase (317 aa).

Residues 6-19, G100, N157, and R182 contribute to the ATP site; that span reads IAEY…HIYQ.

Belongs to the TmcAL family.

It localises to the cytoplasm. The enzyme catalyses cytidine(34) in elongator tRNA(Met) + acetate + ATP = N(4)-acetylcytidine(34) in elongator tRNA(Met) + AMP + diphosphate. In terms of biological role, catalyzes the formation of N(4)-acetylcytidine (ac(4)C) at the wobble position of elongator tRNA(Met), using acetate and ATP as substrates. First activates an acetate ion to form acetyladenylate (Ac-AMP) and then transfers the acetyl group to tRNA to form ac(4)C34. The sequence is that of tRNA(Met) cytidine acetate ligase from Mesomycoplasma hyopneumoniae (strain 232) (Mycoplasma hyopneumoniae).